A 388-amino-acid polypeptide reads, in one-letter code: Putative C-&gt;U-editing enzyme APOBEC-4 (388 aa).

The region spanning 60 to 176 (PQTKHLTFYE…AWNREALRGL (117 aa)) is the CMP/dCMP-type deaminase domain. Position 92 (His-92) interacts with Zn(2+). The active-site Proton donor is the Glu-94. Positions 126 and 133 each coordinate Zn(2+). The tract at residues 322–356 (KVKALRKSPSGRPVKKEEARKGSTRSQEANETNKS) is disordered.

This sequence belongs to the cytidine and deoxycytidylate deaminase family. Zn(2+) serves as cofactor.

In terms of biological role, putative C to U editing enzyme whose physiological substrate is not yet known. The protein is Putative C-&gt;U-editing enzyme APOBEC-4 (Apobec4) of Rattus norvegicus (Rat).